A 426-amino-acid polypeptide reads, in one-letter code: UPF0229 protein YeaH (426 aa).

Residues glycine 78–glutamine 92 show a composition bias toward basic and acidic residues. Residues glycine 78 to glycine 108 form a disordered region.

This sequence belongs to the UPF0229 family.

This is UPF0229 protein YeaH from Salmonella arizonae (strain ATCC BAA-731 / CDC346-86 / RSK2980).